The sequence spans 107 residues: Integration host factor subunit alpha (107 aa).

It belongs to the bacterial histone-like protein family. Heterodimer of an alpha and a beta chain.

Functionally, this protein is one of the two subunits of integration host factor, a specific DNA-binding protein that functions in genetic recombination as well as in transcriptional and translational control. This chain is Integration host factor subunit alpha, found in Bartonella tribocorum (strain CIP 105476 / IBS 506).